A 102-amino-acid chain; its full sequence is Alpha-ketoglutarate dehydrogenase component 4 (102 aa).

Gly-2 is modified (N-acetylglycine). Lys-4 is modified (N6-succinyllysine). The segment at Lys-23 to Pro-70 is disordered. The span at Leu-33–Ser-46 shows a compositional bias: low complexity. Positions His-47–Pro-61 are enriched in polar residues. 3 positions are modified to phosphoserine: Ser-48, Ser-60, and Ser-89.

It belongs to the alpha-ketoglutarate dehydrogenase component 4 family. As to quaternary structure, component of the 2-oxoglutarate dehydrogenase complex (OGDHC), composed of OGDH (2-oxoglutarate dehydrogenase; also called E1 subunit), DLST (dihydrolipoamide succinyltransferase; also called E2 subunit) and DLD (dihydrolipoamide dehydrogenase; also called E3 subunit), and the assembly factor KGD4. Within OGDHC complex, interacts (via N-terminus) with E3 subunit and (via C-terminus) with E2 subunit.

The protein resides in the mitochondrion. Functionally, molecular adapter that is necessary to form a stable 2-oxoglutarate dehydrogenase enzyme complex (OGDHC). Enables the specific recruitment of E3 subunit to E2 subunit in the 2-oxoglutarate dehydrogenase complex (OGDHC). The protein is Alpha-ketoglutarate dehydrogenase component 4 of Mus musculus (Mouse).